The chain runs to 1150 residues: Pesticidal crystal protein Cry9Ea (1150 aa).

Belongs to the delta endotoxin family.

Promotes colloidosmotic lysis by binding to the midgut epithelial cells of insects. The protein is Pesticidal crystal protein Cry9Ea (cry9Ea) of Bacillus thuringiensis subsp. aizawai.